Here is a 315-residue protein sequence, read N- to C-terminus: Aspartate carbamoyltransferase catalytic subunit (315 aa).

Arg-64 and Thr-65 together coordinate carbamoyl phosphate. L-aspartate is bound at residue Lys-92. Positions 114, 142, and 145 each coordinate carbamoyl phosphate. L-aspartate-binding residues include Arg-175 and Arg-229. Carbamoyl phosphate is bound by residues Gly-270 and Pro-271.

This sequence belongs to the aspartate/ornithine carbamoyltransferase superfamily. ATCase family. As to quaternary structure, heterododecamer (2C3:3R2) of six catalytic PyrB chains organized as two trimers (C3), and six regulatory PyrI chains organized as three dimers (R2).

The catalysed reaction is carbamoyl phosphate + L-aspartate = N-carbamoyl-L-aspartate + phosphate + H(+). Its pathway is pyrimidine metabolism; UMP biosynthesis via de novo pathway; (S)-dihydroorotate from bicarbonate: step 2/3. Functionally, catalyzes the condensation of carbamoyl phosphate and aspartate to form carbamoyl aspartate and inorganic phosphate, the committed step in the de novo pyrimidine nucleotide biosynthesis pathway. This is Aspartate carbamoyltransferase catalytic subunit from Xanthobacter autotrophicus (strain ATCC BAA-1158 / Py2).